The chain runs to 374 residues: MWKISNENDIFKKRKPLPPKKSEESQPELTPWQKQNQEYLKKQAEEAASKGENEQAEVTITLQEQSQEEPQQHLPQETVEEEEHFADRLPNVKKTRNKRLYRRLAFILTCLGTAILVALYFVSPLSRLSEVTVSGNKSVESQAIIQQSKLETGSGLWEQYSNRNYFSANIQKKFPIIKKANIKLNGINSFKIDIQEYQIVALAATKGGYHPILENGKTLAETTKAAESGKPIFENFKEDKLIPELMASYNKLPQEIKQGISEIKYAPSKTNKDLINVYMNDGNRVIVNISDLSEKMAYYSQVAEQMDKPGIVDMEVGIFSYPYEKESEETGSEVSEDSAVENQEVVDPNAGVATDGANNGTPTNGENQEVQQAE.

A disordered region spans residues 1–90 (MWKISNENDI…EEEHFADRLP (90 aa)). The Cytoplasmic segment spans residues 1 to 103 (MWKISNENDI…KTRNKRLYRR (103 aa)). Residues 39–53 (YLKKQAEEAASKGEN) are compositionally biased toward basic and acidic residues. Positions 56–75 (AEVTITLQEQSQEEPQQHLP) are enriched in polar residues. The helical transmembrane segment at 104–124 (LAFILTCLGTAILVALYFVSP) threads the bilayer. Over 125–374 (LSRLSEVTVS…GENQEVQQAE (250 aa)) the chain is Extracellular. One can recognise a POTRA domain in the interval 126-197 (SRLSEVTVSG…NSFKIDIQEY (72 aa)). Residues 325-374 (KESEETGSEVSEDSAVENQEVVDPNAGVATDGANNGTPTNGENQEVQQAE) are disordered. Positions 326-339 (ESEETGSEVSEDSA) are enriched in acidic residues. Residues 356 to 374 (GANNGTPTNGENQEVQQAE) are compositionally biased toward polar residues.

The protein belongs to the FtsQ/DivIB family. DivIB subfamily.

Its subcellular location is the cell membrane. Cell division protein that may be involved in stabilizing or promoting the assembly of the division complex. This Enterococcus faecalis (strain 62) protein is Cell division protein DivIB.